We begin with the raw amino-acid sequence, 78 residues long: MSRVCQLTGTRANNGMAVSHSHIRTKKLQQANLQQRRLWWAEGNRWLKLRVSTRALKTIQKKGLGVYAKSLGIDLNKI.

Belongs to the bacterial ribosomal protein bL28 family.

This is Large ribosomal subunit protein bL28 from Prochlorococcus marinus (strain MIT 9303).